The sequence spans 1630 residues: Histone transcription regulator 3 homolog (1630 aa).

One copy of the TPR 1 repeat lies at 8 to 42 (NAASEDLDKEKRTLEIRIEEAVQIYQNALSAQKQG). The segment at 325–347 (KDIVPPPSDNLPKPQLLKRPIDD) is disordered. The stretch at 1230–1263 (WRALYMLGKACRKCGDMENALVHFEAAAALAPTK) is one TPR 2 repeat.

This sequence belongs to the HIR3 family. As to quaternary structure, interacts with hip1 and slm9.

It localises to the nucleus. Functionally, has a role in a nucleosome assembly pathway that is required for the integrity of heterochromatin and proper chromosome segregation. Required for transcriptional silencing in the outer repeat (otr) region of centromeric repeats and the Tf2 long terminal repeat retrotransposons. In Schizosaccharomyces pombe (strain 972 / ATCC 24843) (Fission yeast), this protein is Histone transcription regulator 3 homolog (hip3).